We begin with the raw amino-acid sequence, 380 residues long: Histidinol-phosphate aminotransferase (380 aa).

N6-(pyridoxal phosphate)lysine is present on Lys-235.

This sequence belongs to the class-II pyridoxal-phosphate-dependent aminotransferase family. Histidinol-phosphate aminotransferase subfamily. As to quaternary structure, homodimer. The cofactor is pyridoxal 5'-phosphate.

The catalysed reaction is L-histidinol phosphate + 2-oxoglutarate = 3-(imidazol-4-yl)-2-oxopropyl phosphate + L-glutamate. Its pathway is amino-acid biosynthesis; L-histidine biosynthesis; L-histidine from 5-phospho-alpha-D-ribose 1-diphosphate: step 7/9. The sequence is that of Histidinol-phosphate aminotransferase from Rhodococcus jostii (strain RHA1).